The sequence spans 115 residues: LVLDVDGNPLEVGSEYYIGRAVGFYVVERFSEVDRGDPLSSDVQIDSGLSAYCRSDGFWGVPPSSFRIEKTEGFPNAYKIAYSPPTTSSQQQRYPDLHSGLNLVGLTDDSARVVL.

Belongs to the protease inhibitor I3 (leguminous Kunitz-type inhibitor) family.

Exhibits Kunitz trypsin protease inhibitor activity. In Selenicereus undatus (Pitahaya), this protein is Kunitz-type trypsin inhibitor 1.